The primary structure comprises 303 residues: Rhomboid-related protein 2 (303 aa).

A disordered region spans residues M20–R39. Basic and acidic residues predominate over residues E28–R39. Helical transmembrane passes span P72–W92, L128–I148, V159–P179, L183–V203, F212–L232, V245–F265, and F278–F298. S187 acts as the Nucleophile in catalysis. H250 is an active-site residue.

It belongs to the peptidase S54 family. Post-translationally, proteolytic processing of the proenzyme produces a N-terminal fragment (NTF) and a C-terminal fragment (CTF). The processing is required for activation of the protease.

Its subcellular location is the cell membrane. It catalyses the reaction Cleaves type-1 transmembrane domains using a catalytic dyad composed of serine and histidine that are contributed by different transmembrane domains.. Functionally, involved in regulated intramembrane proteolysis and the subsequent release of functional polypeptides from their membrane anchors. Known substrate: EFNB3. This is Rhomboid-related protein 2 (RHBDL2) from Homo sapiens (Human).